The primary structure comprises 2147 residues: Probable serine/threonine-protein kinase roco6 (2147 aa).

Topologically, residues 1 to 1055 (MNSIHKQHYT…LDHSRVEFNR (1055 aa)) are extracellular. 11 LRR repeats span residues 69-89 (DMKY…MMIP), 101-122 (SISI…LKQL), 124-145 (QLIS…FPEE), 148-169 (LLRK…FNKF), 171-192 (ILED…LFPE), 193-214 (GIMR…PWFE), 215-236 (SLLT…PFHL), 237-256 (VRVS…VILR), 306-328 (HLTH…ANLT), 329-350 (ELVR…IVSY), and 352-372 (RLEH…PRRI). A Roc domain is found at 390–750 (QGEPSYRVKL…DLLKKTVVEL (361 aa)). The small GTPase-like stretch occupies residues 390–750 (QGEPSYRVKL…DLLKKTVVEL (361 aa)). 403–410 (GQENVGKT) provides a ligand contact to GTP. Disordered stretches follow at residues 491 to 582 (NSNG…VGTN) and 602 to 621 (SNLS…GGSG). 4 stretches are compositionally biased toward low complexity: residues 492–512 (SNGV…NIHS), 519–531 (NVNS…SNNS), 539–568 (NSFL…NVNS), and 602–617 (SNLS…NNNS). Residues 634–638 (DCAGQ) and 691–694 (THLD) contribute to the GTP site. The 135-residue stretch at 758 to 892 (PELYLKLEKL…RFELMFPLDS (135 aa)) folds into the COR domain. 2 stretches are compositionally biased toward low complexity: residues 905–941 (GNSY…SPST) and 960–977 (SGNN…RSIS). Residues 905–995 (GNSYVNNNNN…NSDLDLIGGG (91 aa)) form a disordered region. One copy of the WD 1 repeat lies at 1051 to 1098 (VEFNRWIQLSFAPAGLFSRLLIRLLISKEFDMKPILYWRNGVVVESQS). A helical transmembrane segment spans residues 1056–1076 (WIQLSFAPAGLFSRLLIRLLI). Residues 1077 to 2147 (SKEFDMKPIL…CGTNNVCIWS (1071 aa)) are Cytoplasmic-facing. LRR repeat units follow at residues 1237 to 1263 (ILSI…PPPP), 1274 to 1297 (DDNI…GSQP), and 1325 to 1348 (ESSL…TYKY). The Protein kinase domain maps to 1356–1627 (FESPKLIGRG…KIVKRIKQII (272 aa)). Residues 1362 to 1370 (IGRGASGKI) and lysine 1383 each bind ATP. Aspartate 1481 acts as the Proton acceptor in catalysis. The interval 1653–1699 (ADSQPFHYHQQQQPSLNSTNQLQQQQYSSVLTSPRSNLSDSSNSSQN) is disordered. Residues 1662 to 1699 (QQQQPSLNSTNQLQQQQYSSVLTSPRSNLSDSSNSSQN) show a composition bias toward low complexity. WD repeat units follow at residues 1735 to 1774 (QPEA…QIFR) and 1778 to 1820 (LHPG…LDDQ). The PH domain maps to 1821 to 1923 (SGTKSDFITK…WLTAINRVIN (103 aa)). A WD 4 repeat occupies 2031–2068 (HYSKPITSMALVEKNVWISCEDESLSVWDGDTGSFIRK).

This sequence belongs to the protein kinase superfamily. TKL Ser/Thr protein kinase family. ROCO subfamily.

It localises to the membrane. It carries out the reaction L-seryl-[protein] + ATP = O-phospho-L-seryl-[protein] + ADP + H(+). The enzyme catalyses L-threonyl-[protein] + ATP = O-phospho-L-threonyl-[protein] + ADP + H(+). Its function is as follows. May act as a serine/threonine-protein kinase and guanine-nucleotide releasing factor. This is Probable serine/threonine-protein kinase roco6 (roco6) from Dictyostelium discoideum (Social amoeba).